The primary structure comprises 143 residues: Flagellar assembly factor FliW (143 aa).

The protein belongs to the FliW family. Interacts with translational regulator CsrA and flagellin(s).

Its subcellular location is the cytoplasm. Its function is as follows. Acts as an anti-CsrA protein, binds CsrA and prevents it from repressing translation of its target genes, one of which is flagellin. Binds to flagellin and participates in the assembly of the flagellum. This is Flagellar assembly factor FliW from Bacillus licheniformis (strain ATCC 14580 / DSM 13 / JCM 2505 / CCUG 7422 / NBRC 12200 / NCIMB 9375 / NCTC 10341 / NRRL NRS-1264 / Gibson 46).